Reading from the N-terminus, the 82-residue chain is High-potential iron-sulfur protein (82 aa).

Cysteine 42, cysteine 45, cysteine 60, and cysteine 74 together coordinate [4Fe-4S] cluster.

Belongs to the high-potential iron-sulfur protein (HiPIP) family. In terms of assembly, homodimer.

The protein resides in the periplasm. In terms of biological role, specific class of high-redox-potential 4Fe-4S ferredoxins. Functions in anaerobic electron transport in most purple and in some other photosynthetic bacteria and in at least one genus (Paracoccus) of halophilic, denitrifying bacteria. This chain is High-potential iron-sulfur protein (hip), found in Marichromatium purpuratum (Chromatium purpuratum).